Reading from the N-terminus, the 498-residue chain is Guanosine-5'-triphosphate,3'-diphosphate pyrophosphatase (498 aa).

Belongs to the GppA/Ppx family. GppA subfamily.

It carries out the reaction guanosine 3'-diphosphate 5'-triphosphate + H2O = guanosine 3',5'-bis(diphosphate) + phosphate + H(+). Its pathway is purine metabolism; ppGpp biosynthesis; ppGpp from GTP: step 2/2. Catalyzes the conversion of pppGpp to ppGpp. Guanosine pentaphosphate (pppGpp) is a cytoplasmic signaling molecule which together with ppGpp controls the 'stringent response', an adaptive process that allows bacteria to respond to amino acid starvation, resulting in the coordinated regulation of numerous cellular activities. This is Guanosine-5'-triphosphate,3'-diphosphate pyrophosphatase from Yersinia pseudotuberculosis serotype O:1b (strain IP 31758).